Consider the following 380-residue polypeptide: MKAKSLLLALAGLACTFSATAQEATTQNKAGMHTAFQRDKASDHWFIDIAGGAGMALSGWNNDVDFVDRLSIVPTFGIGKWHEPYFGTRLQFTGFDIYGFPQGSKERNHNYFGNAHLDFMFDLTNYFGVYRPNRVFHIIPWAGIGFGYKFHSENANGEKVGSKDDMTGTVNVGLMLKFRLSRVVDFNIEGQAFAGKMNFIGTKRGKADFPVMATAGLTFNLGKTEWTEIVPMDYALVNDLNNQINSLRGQVEELSRRPVSCPECPEPTQPTVTRVVVDNVVYFRINSAKIDRNQEINVYNTAEYAKTNNAPIKVVGYADEKTGTAAYNMKLSERRAKAVAKMLEKYGVSADRITIEWKGSSEQIYEENAWNRIVVMTAAE.

Positions methionine 1–alanine 21 are cleaved as a signal peptide. Glutamine 22 carries the pyrrolidone carboxylic acid modification. Residues proline 270–glutamate 380 form the OmpA-like domain.

This sequence belongs to the outer membrane OOP (TC 1.B.6) superfamily. As to quaternary structure, disulfide-linked heterodimer with Omp41.

The protein localises to the cell outer membrane. May have porin activity and function in peptidoglycan binding. This Porphyromonas gingivalis (strain ATCC BAA-308 / W83) protein is Outer membrane protein 40.